The chain runs to 329 residues: Probable allantoicase (329 aa).

The protein belongs to the allantoicase family.

It carries out the reaction allantoate + H2O = (S)-ureidoglycolate + urea. It participates in nitrogen metabolism; (S)-allantoin degradation; (S)-ureidoglycolate from allantoate (aminidohydrolase route): step 1/1. This Nocardia farcinica (strain IFM 10152) protein is Probable allantoicase.